A 567-amino-acid chain; its full sequence is ERO1-like protein 2 (567 aa).

Residues 1 to 22 (MKIAKGLVGLLILYKNVCQVLC) form the signal peptide. A glycan (N-linked (GlcNAc...) asparagine) is linked at Asn-49. 4 disulfide bridges follow: Cys-88–Cys-386, Cys-98–Cys-103, Cys-154–Cys-325, and Cys-389–Cys-392. Residues Arg-188, Thr-190, Trp-201, Ser-258, His-261, and Lys-290 each contribute to the FAD site. Cys-389 serves as the catalytic Nucleophile. Residue Cys-392 is part of the active site. A glycan (N-linked (GlcNAc...) asparagine) is linked at Asn-546.

The protein belongs to the EROs family. As to quaternary structure, may function both as a monomer and a homodimer. It depends on FAD as a cofactor. N-glycosylated.

Its subcellular location is the endoplasmic reticulum membrane. In terms of biological role, essential oxidoreductase that oxidizes proteins in the endoplasmic reticulum to produce disulfide bonds. Acts by oxidizing directly pdi1 isomerase through a direct disulfide exchange. Does not act as a direct oxidant of folding substrate, but relies on pdi1 to transfer oxidizing equivalent. Does not oxidize all pdi related proteins, suggesting that it can discriminate between pdi1 and related proteins. Its reoxidation probably involves electron transfer to molecular oxygen via FAD. Acts independently of glutathione. May be responsible for a significant proportion of reactive oxygen species (ROS) in the cell, thereby being a source of oxidative stress. The sequence is that of ERO1-like protein 2 (ero12) from Schizosaccharomyces pombe (strain 972 / ATCC 24843) (Fission yeast).